A 620-amino-acid chain; its full sequence is Chaperone protein HscA homolog (620 aa).

The protein belongs to the heat shock protein 70 family.

Its function is as follows. Chaperone involved in the maturation of iron-sulfur cluster-containing proteins. Has a low intrinsic ATPase activity which is markedly stimulated by HscB. The sequence is that of Chaperone protein HscA homolog from Colwellia psychrerythraea (strain 34H / ATCC BAA-681) (Vibrio psychroerythus).